Consider the following 1320-residue polypeptide: MSETIDNPTVEEYNEKETVVSGEQVEQVEQVEQENEQVSQSFQISIKTPAEIGTINIQVQPTDTLIDIQSFLYETSETCLYSSFEFRLYGKQIPEYSELSSIEGLVEGATLEMVPVDYNERSAKLHVKRLRDIMNTGLTEFANMNNPSLFTSFSFPEKSNILTEEQQLEEQKQKFEQQQQQQQQTEDKEEKETIATEQQQNKKNKHHNKKGNKKNNGDESLNNENNEEKLTPQQKERKQKMTEIKGIDKPMLSSYYPESPIAPVQCVKSMIYSGWSPVPGYRKLFGDLFYLDITLLEGTTICVTASTQGFFINQSSNATFNPSVSPKATINHSLHQLLTQVSRLFRRGLNQILTNIGRNHPFDMLPGVLPVHNWVASSKTNRYDINKGTDTFVSVQDVELRGNPRDWNEEIQAPKELPKSTVQERIIRDRAISKVNSEFVECAIRGAQVIVDKAILPINPAENQRSHMFLYNNIFFSYALDTRDSFTDCGGDDAARTSANNDLKGIRLYNLADIDGLYTLGTAIVDYKGQRIIAQSLIPGILTTEKTSKIYYGSMDTPTNEEEEQQQKEENEENKNNNTKSIKADPEFHSRLLQAASLLHLSESKVISEDTNQEVSVCTSFESKGIIGIDGRRYILDLIKATPRDPNYTETKDQLSVLRPEAIATYSEYFKVTWLNQKRQQKLKEKEERQKKEGIDPPTATARDEDVQLTEEDLAQSPVVSFNPNLFSKVKLGGTPEEQQKDIEDLKAIGAFLKGILIPRLIEDLMLFNVAPVDGQTLTQVMHVRGINMRYLGYIAKNESANVPFIQDLLFNEMVSRAAKHCFNRLLRSTNASDMAHSISHFLNCFLGTETGSVSADEKSKKAKQIKSSAINELTQGKLWSEIAQLVSSKFDFEIPTHSVPMESRLIVLRCICLKMGIQILAKDYNFTTDAPFSPEDIVDLFPIVKHVNPRSTDGLDLLEAGKTFFNQRKYELATELLGEALAIYHQVHGPIHPDAGACFTHLAMLAYQNEQYDLAIEYQKNALVITEKTAGLDHHETVQAYTTLAVFCQRSGRYNESIGYMKHVLYLTDLLGGEYNPERASIYTAIAAILEDTERFDLALEFLKQTLKHQEFLFTPDHLMCSTTYHKMAIVCARATNFDDSIIHQKKSTDILEKELGEAHPRTKESLEFYTGLSQTANQIKLFKQHQALKAEQDELARLQKEKADQFKKSQPRVSAMPPSLENGSVSELLNYINGKPKKSQSKKSKSTNTTTTTNTTTATTSKSKITMAKTPNPTTKATTSKSSATASSAATNKSTTKTNPTSSSAADSSKPNKKSSKN.

Disordered regions lie at residues 166 to 241 (QQLE…KQKM), 552 to 582 (YGSM…TKSI), and 683 to 708 (LKEK…EDVQ). The span at 185 to 194 (TEDKEEKETI) shows a compositional bias: basic and acidic residues. Positions 202-213 (KKNKHHNKKGNK) are enriched in basic residues. Composition is skewed to basic and acidic residues over residues 226-241 (NEEK…KQKM), 565-575 (QQQKEENEENK), and 683-695 (LKEK…KEGI). The Clu domain occupies 379–649 (KTNRYDINKG…KATPRDPNYT (271 aa)). 5 TPR repeats span residues 955–988 (GLDL…YHQV), 997–1030 (GACF…TEKT), 1039–1072 (VQAY…TDLL), 1081–1114 (ASIY…QEFL), and 1123–1156 (STTY…LEKE). Positions 1204 to 1320 (KADQFKKSQP…SKPNKKSSKN (117 aa)) are disordered. A compositionally biased stretch (basic residues) spans 1237–1247 (KPKKSQSKKSK). A compositionally biased stretch (low complexity) spans 1248–1311 (STNTTTTTNT…PTSSSAADSS (64 aa)).

It belongs to the CLU family.

The protein resides in the cytoplasm. Its function is as follows. mRNA-binding protein involved in proper cytoplasmic distribution of mitochondria. In Dictyostelium discoideum (Social amoeba), this protein is Clustered mitochondria protein homolog.